Consider the following 742-residue polypeptide: MTRRSRRVAYVAKACVSCARSKQRCDGHSPCGRCSLKNLDCVYRHLLQKGQNSTRGASPQSPSASRESYSQNTLPVVQSQTRPLALDSAPSVYSPASEAIGEPPSLSTDVGNNFVEMSMDSGQETFPDGVSVNNLTFKIGESDLQGWASLGVDIPWNSSMHSMLDNPLFELPDPMAFFFQSPSELLGQSDVQAIPCPMDSEPMVHQLECETPTPNFTHSLDISSYQGQSNQTSPETTSHSSVRDDAELESWRAEDYGHVPDINDEAYQVMVFTFEQLNSDNVYCIPFTDKHLPSLQHMQIYMQVYFEEYHPIFPLLHKATFSPNKDDWLLSLAVSSIGCLFSKTLRSKEVFPIMQEFLRRAIRIQTSTPSISVAQASVLNQIGMMYGGDLRFAECAHETMAQLTTQCRKIASSSHNLANSSIAENTVSQGWQAWVRAQLEIRLFYCAWLVDSQQVGFFAFSSTIPIDFLQFPMPINEYVWGMSTAETWQNSLAEDSSSQQLTSLRQVLMGLYRYREVPGQLDAFNSLLLVMGILNDLSGLRHAHLYLEILQRRVETLPPTALTRAVMTNIHMVSLLIYFPTREVIAFGRWRVTEAQHSIVTEKLKRWMSDTRSARAALVHACSIWSQVRLSRTNSHHEPPALLYSAISIWALVEHSEEVVENADELPILRLDSLNQDVKLWAAGNEKKRLYLSGVGLLAHRGALARLISETARLLEQRIAWPQAWRTGPHLKQSYAESRRVQ.

The zn(2)-C6 fungal-type DNA-binding region spans 15 to 41 (CVSCARSKQRCDGHSPCGRCSLKNLDC). Disordered regions lie at residues 50–80 (GQNS…VQSQ) and 218–244 (HSLD…SVRD). Polar residues predominate over residues 218–240 (HSLDISSYQGQSNQTSPETTSHS).

It localises to the nucleus. Its function is as follows. Transcription factor; part of the DMATS1 gene cluster that mediates the biosynthesis of a reversely N-prenylated monomeric L-tryptophan (r-N-DMAT). Seems not to regulate the expression of the DMATS1 cluster. This Gibberella fujikuroi (strain CBS 195.34 / IMI 58289 / NRRL A-6831) (Bakanae and foot rot disease fungus) protein is Transcription factor FFUJ_09177.